The chain runs to 236 residues: Small ribosomal subunit protein uS3 (236 aa).

The KH type-2 domain occupies 39–107; it reads IRKFLKKELY…EISINIKEVK (69 aa). Positions 213–229 are enriched in basic and acidic residues; sequence QPEKKEEAPARDKEGRG. Positions 213-236 are disordered; sequence QPEKKEEAPARDKEGRGTRRRGRQ.

The protein belongs to the universal ribosomal protein uS3 family. As to quaternary structure, part of the 30S ribosomal subunit. Forms a tight complex with proteins S10 and S14.

Its function is as follows. Binds the lower part of the 30S subunit head. Binds mRNA in the 70S ribosome, positioning it for translation. This chain is Small ribosomal subunit protein uS3, found in Wolinella succinogenes (strain ATCC 29543 / DSM 1740 / CCUG 13145 / JCM 31913 / LMG 7466 / NCTC 11488 / FDC 602W) (Vibrio succinogenes).